The following is a 108-amino-acid chain: MIPGEYQLQDGEIELCAGRERITVEVANTGDRPIQIGSHYHFAEANPALIFDRDKTRGYRLDVAAGTAIRFEPGQRREVTLIPFVGRRHVYGFRQAVMGALDEKGATS.

This sequence belongs to the urease beta subunit family. In terms of assembly, heterotrimer of UreA (gamma), UreB (beta) and UreC (alpha) subunits. Three heterotrimers associate to form the active enzyme.

It localises to the cytoplasm. The catalysed reaction is urea + 2 H2O + H(+) = hydrogencarbonate + 2 NH4(+). Its pathway is nitrogen metabolism; urea degradation; CO(2) and NH(3) from urea (urease route): step 1/1. This Chromohalobacter salexigens (strain ATCC BAA-138 / DSM 3043 / CIP 106854 / NCIMB 13768 / 1H11) protein is Urease subunit beta.